Here is a 464-residue protein sequence, read N- to C-terminus: A-type ATP synthase subunit B (464 aa).

It belongs to the ATPase alpha/beta chains family. Has multiple subunits with at least A(3), B(3), C, D, E, F, H, I and proteolipid K(x).

It is found in the cell membrane. Functionally, component of the A-type ATP synthase that produces ATP from ADP in the presence of a proton gradient across the membrane. The B chain is a regulatory subunit. In Methanococcus aeolicus (strain ATCC BAA-1280 / DSM 17508 / OCM 812 / Nankai-3), this protein is A-type ATP synthase subunit B.